The chain runs to 362 residues: Chorismate synthase (362 aa).

NADP(+) is bound at residue Arg46. FMN contacts are provided by residues 122-124 (RSS), 238-239 (NA), Gly278, 293-297 (KPTPS), and Arg319.

Belongs to the chorismate synthase family. In terms of assembly, homotetramer. FMNH2 serves as cofactor.

It catalyses the reaction 5-O-(1-carboxyvinyl)-3-phosphoshikimate = chorismate + phosphate. It participates in metabolic intermediate biosynthesis; chorismate biosynthesis; chorismate from D-erythrose 4-phosphate and phosphoenolpyruvate: step 7/7. Catalyzes the anti-1,4-elimination of the C-3 phosphate and the C-6 proR hydrogen from 5-enolpyruvylshikimate-3-phosphate (EPSP) to yield chorismate, which is the branch point compound that serves as the starting substrate for the three terminal pathways of aromatic amino acid biosynthesis. This reaction introduces a second double bond into the aromatic ring system. The sequence is that of Chorismate synthase from Campylobacter jejuni subsp. jejuni serotype O:23/36 (strain 81-176).